A 495-amino-acid polypeptide reads, in one-letter code: DNA-directed RNA polymerase subunit alpha (495 aa).

The tract at residues 1–301 (MPYIKHIETK…RMLASLQAPP (301 aa)) is alpha N-terminal domain (alpha-NTD). Disordered regions lie at residues 159–227 (SLVP…EAPH) and 391–495 (QEQV…PEET). The segment at 170 to 237 (PRDPLEPEND…IPSMRDDHMT (68 aa)) is insert. A compositionally biased stretch (basic and acidic residues) spans 172-186 (DPLEPENDSKSETKS). 2 stretches are compositionally biased toward polar residues: residues 207 to 219 (VNAQ…SNST) and 391 to 403 (QEQV…SQIA). Residues 317–495 (AKEIALTPIE…LSSSQNPEET (179 aa)) form an alpha C-terminal domain (alpha-CTD) region. The span at 417 to 426 (RPIDSKETRR) shows a compositional bias: basic and acidic residues. The segment covering 444-453 (RKSSKTKVKA) has biased composition (basic residues). 2 stretches are compositionally biased toward polar residues: residues 464–473 (KSANLQQAEE) and 486–495 (LSSSQNPEET).

The protein belongs to the RNA polymerase alpha chain family. In terms of assembly, in plastids the minimal PEP RNA polymerase catalytic core is composed of four subunits: alpha, beta, beta', and beta''. When a (nuclear-encoded) sigma factor is associated with the core the holoenzyme is formed, which can initiate transcription.

The protein resides in the plastid. It localises to the chloroplast. It catalyses the reaction RNA(n) + a ribonucleoside 5'-triphosphate = RNA(n+1) + diphosphate. Its function is as follows. DNA-dependent RNA polymerase catalyzes the transcription of DNA into RNA using the four ribonucleoside triphosphates as substrates. The chain is DNA-directed RNA polymerase subunit alpha from Nephroselmis olivacea (Green alga).